Consider the following 172-residue polypeptide: Orotate phosphoribosyltransferase (172 aa).

5-phospho-alpha-D-ribose 1-diphosphate contacts are provided by residues arginine 88, lysine 89, lysine 92, histidine 94, and 113-121 (EDVTTSGGS). Threonine 117 and arginine 145 together coordinate orotate.

The protein belongs to the purine/pyrimidine phosphoribosyltransferase family. PyrE subfamily. In terms of assembly, homodimer. Mg(2+) is required as a cofactor.

It catalyses the reaction orotidine 5'-phosphate + diphosphate = orotate + 5-phospho-alpha-D-ribose 1-diphosphate. The protein operates within pyrimidine metabolism; UMP biosynthesis via de novo pathway; UMP from orotate: step 1/2. Its function is as follows. Catalyzes the transfer of a ribosyl phosphate group from 5-phosphoribose 1-diphosphate to orotate, leading to the formation of orotidine monophosphate (OMP). The chain is Orotate phosphoribosyltransferase from Methanospirillum hungatei JF-1 (strain ATCC 27890 / DSM 864 / NBRC 100397 / JF-1).